The primary structure comprises 717 residues: Photosystem I P700 chlorophyll a apoprotein A1 (717 aa).

8 consecutive transmembrane segments (helical) span residues 58–81, 144–167, 183–207, 279–297, 334–357, 373–399, 421–443, and 519–537; these read VFSAHFGQLSIIFLWLSGMYFHGA, LYCTAIGALVFAGLMLFAGWFHYH, LNHHLAGLLGLGSLSWAGHQVHVSL, IAHHHLAIAILFLIAGHMY, WHAQLSLNLAMLGSLTIVVAHHMY, LSLFTHHMWIGGFLIVGAAAHAAIFMV, AIISHLNWACIFLGFHSFGLYIH, and FLVHHIHAFTIHVTVLILL. Positions 561 and 570 each coordinate [4Fe-4S] cluster. The next 2 helical transmembrane spans lie at 577–598 and 652–674; these read HVFLGLFWMYNAISVVIFHFSW and LSAYGLFFLGAHFVWAFSLMFLF. Residue His663 coordinates chlorophyll a'. Chlorophyll a contacts are provided by Met671 and Tyr679. Trp680 lines the phylloquinone pocket. A helical transmembrane segment spans residues 712-717; sequence AVGVTH.

This sequence belongs to the PsaA/PsaB family. The PsaA/B heterodimer binds the P700 chlorophyll special pair and subsequent electron acceptors. PSI consists of a core antenna complex that captures photons, and an electron transfer chain that converts photonic excitation into a charge separation. The eukaryotic PSI reaction center is composed of at least 11 subunits. P700 is a chlorophyll a/chlorophyll a' dimer, A0 is one or more chlorophyll a, A1 is one or both phylloquinones and FX is a shared 4Fe-4S iron-sulfur center. serves as cofactor.

The protein localises to the plastid. Its subcellular location is the chloroplast thylakoid membrane. The enzyme catalyses reduced [plastocyanin] + hnu + oxidized [2Fe-2S]-[ferredoxin] = oxidized [plastocyanin] + reduced [2Fe-2S]-[ferredoxin]. Its function is as follows. PsaA and PsaB bind P700, the primary electron donor of photosystem I (PSI), as well as the electron acceptors A0, A1 and FX. PSI is a plastocyanin-ferredoxin oxidoreductase, converting photonic excitation into a charge separation, which transfers an electron from the donor P700 chlorophyll pair to the spectroscopically characterized acceptors A0, A1, FX, FA and FB in turn. Oxidized P700 is reduced on the lumenal side of the thylakoid membrane by plastocyanin. The protein is Photosystem I P700 chlorophyll a apoprotein A1 of Drimys winteri (Winter's bark).